We begin with the raw amino-acid sequence, 490 residues long: Protein LMBR1L (490 aa).

Residues 1 to 21 (MEAPDYEVLSVREQLFHERIR) are Extracellular-facing. The segment at 1-59 (MEAPDYEVLSVREQLFHERIRECIISTLLFATLYILCHIFLTRFKKPAEFTTVDDEDAT) is interaction with LGB. Positions 1–76 (MEAPDYEVLS…LCTFTLAIAL (76 aa)) are LCN1-binding. A helical transmembrane segment spans residues 22–42 (ECIISTLLFATLYILCHIFLT). The Cytoplasmic segment spans residues 43–66 (RFKKPAEFTTVDDEDATVNKIALE). The chain crosses the membrane as a helical span at residues 67–87 (LCTFTLAIALGAVLLLPFSII). Residues 88 to 114 (SNEVLLSLPRNYYIQWLNGSLIHGLWN) lie on the Extracellular side of the membrane. The helical transmembrane segment at 115 to 135 (LVFLFSNLSLIFLMPFAYFFT) threads the bilayer. Residues 136-154 (ESEGFAGSRRGVLGRVYET) are Cytoplasmic-facing. The chain crosses the membrane as a helical span at residues 155–175 (VVMLMLLTLLVLGMVWVASAI). The Extracellular portion of the chain corresponds to 176 to 196 (LDNNKASRESLYDFWEYYLPY). The chain crosses the membrane as a helical span at residues 197–217 (LYSCISFLGVLLLLVCTPLGL). The Cytoplasmic portion of the chain corresponds to 218–305 (ARMFSVTGKL…NLGYPLAMLC (88 aa)). A helical membrane pass occupies residues 306–326 (LLVLTGLSVLIVAIHILELLI). Residues 327 to 350 (DEAAMPRGMQDASLGQVSFSRLGS) are Extracellular-facing. Residues 351–371 (FGAVIQVALIFYLMVSSVVGF) traverse the membrane as a helical segment. Over 372–388 (YSSPLFRSLRPRWHDTA) the chain is Cytoplasmic. The helical transmembrane segment at 389-409 (MTQIIGNCVCLLVLSSALPVF) threads the bilayer. The Extracellular segment spans residues 410–431 (SRTLGLTRFDLLGDFGRFNWLG). A helical transmembrane segment spans residues 432 to 452 (NFYIVFLYNAAFAGLTTLCLV). Topologically, residues 453-490 (KTFTAAVRAELIRAFGLDRLPLPVSGFPPRASRKTQHQ) are cytoplasmic.

The protein belongs to the LIMR family. As to quaternary structure, dimer. Can also form higher oligomers. Interacts with LCN1; this interaction mediates the endocytosis of LCN1. Interacts with UBAC2, FAF2, VCP, AMFR, ZNRF3, CTNNB1, LRP6, GSK3A, GSK3B, FZD6, DVL2 and RNF43. Interaction with LGB and SCGB1A1 is controversial.

It localises to the cell membrane. The protein resides in the endoplasmic reticulum membrane. Functionally, plays an essential role in lymphocyte development by negatively regulating the canonical Wnt signaling pathway. In association with UBAC2 and E3 ubiquitin-protein ligase AMFR, promotes the ubiquitin-mediated degradation of CTNNB1 and Wnt receptors FZD6 and LRP6. LMBR1L stabilizes the beta-catenin destruction complex that is required for regulating CTNNB1 levels. Acts as a LCN1 receptor and can mediate its endocytosis. This chain is Protein LMBR1L (LMBR1L), found in Pongo abelii (Sumatran orangutan).